A 253-amino-acid chain; its full sequence is RBPJ-interacting and tubulin-associated protein 1 (253 aa).

Disordered stretches follow at residues 30–89 (SPAR…KNKY), 127–175 (TPPA…LCVP), and 188–253 (HLTV…PPWK). Positions 71–81 (SPSSRGSTPNL) are enriched in polar residues. The Nuclear localization signal signature appears at 81–97 (LTPRKKNKYRLIGHAPS). The segment at 112-140 (RMAVGDAAKLRTLFWTPPATPRGSHTPCP) is interaction with RBPJ/RBPSUH. The interval 140–253 (PRETPLRAIH…CPPKPKPPWK (114 aa)) is interaction with tubulin. The span at 188-228 (HLTVPSTGHPASSAPQTNGPWSPRPNTSGATVQSPLVTSKA) shows a compositional bias: polar residues.

Belongs to the RITA family. In terms of assembly, interacts with RBPJ/RBPSUH.

The protein resides in the cytoplasm. Its subcellular location is the nucleus. It localises to the cytoskeleton. The protein localises to the microtubule organizing center. It is found in the centrosome. In terms of biological role, tubulin-binding protein that acts as a negative regulator of Notch signaling pathway. Shuttles between the cytoplasm and the nucleus and mediates the nuclear export of RBPJ/RBPSUH, thereby preventing the interaction between RBPJ/RBPSUH and NICD product of Notch proteins (Notch intracellular domain), leading to down-regulate Notch-mediated transcription. May play a role in neurogenesis. The polypeptide is RBPJ-interacting and tubulin-associated protein 1 (Rita1) (Mus musculus (Mouse)).